We begin with the raw amino-acid sequence, 96 residues long: Uteroglobin (96 aa).

The signal sequence occupies residues 1-21 (MKIAITITVVMLSICCSSASS).

This sequence belongs to the secretoglobin family. As to quaternary structure, antiparallel homodimer; disulfide-linked. Interaction with LMBR1L is controversial. In terms of tissue distribution, club cells (nonciliated cells of the surface epithelium of the pulmonary airways).

It localises to the secreted. Binds phosphatidylcholine, phosphatidylinositol, polychlorinated biphenyls (PCB) and weakly progesterone, potent inhibitor of phospholipase A2. This Mus musculus (Mouse) protein is Uteroglobin (Scgb1a1).